We begin with the raw amino-acid sequence, 43 residues long: MEISTFLSIFISAALLGITGYSIYTAFGPPSKNLRDPFEEHED.

A helical membrane pass occupies residues 5-27; sequence TFLSIFISAALLGITGYSIYTAF.

This sequence belongs to the PsbN family.

Its subcellular location is the plastid. The protein resides in the cyanelle thylakoid membrane. May play a role in photosystem I and II biogenesis. The protein is Protein PsbN of Cyanophora paradoxa.